The chain runs to 127 residues: PRA1 family protein C (127 aa).

Helical transmembrane passes span 15-35 (IFIS…LIVA), 53-73 (VIDD…IFLL), and 76-96 (VSRG…VHGM).

The protein belongs to the PRA1 family.

It is found in the endoplasmic reticulum membrane. Its function is as follows. May be involved in both secretory and endocytic intracellular trafficking in the endosomal/prevacuolar compartments. The polypeptide is PRA1 family protein C (PRA1C) (Arabidopsis thaliana (Mouse-ear cress)).